The sequence spans 284 residues: Bifunctional protein FolD 2 (284 aa).

NADP(+) is bound by residues 164–166, S189, and I230; that span reads GRG.

The protein belongs to the tetrahydrofolate dehydrogenase/cyclohydrolase family. In terms of assembly, homodimer.

It catalyses the reaction (6R)-5,10-methylene-5,6,7,8-tetrahydrofolate + NADP(+) = (6R)-5,10-methenyltetrahydrofolate + NADPH. The enzyme catalyses (6R)-5,10-methenyltetrahydrofolate + H2O = (6R)-10-formyltetrahydrofolate + H(+). Its pathway is one-carbon metabolism; tetrahydrofolate interconversion. Catalyzes the oxidation of 5,10-methylenetetrahydrofolate to 5,10-methenyltetrahydrofolate and then the hydrolysis of 5,10-methenyltetrahydrofolate to 10-formyltetrahydrofolate. This chain is Bifunctional protein FolD 2, found in Desulfitobacterium hafniense (strain Y51).